The chain runs to 420 residues: Glyceraldehyde-3-phosphate dehydrogenase GAPCP2, chloroplastic (420 aa).

A chloroplast-targeting transit peptide spans methionine 1 to lysine 66. NAD(+)-binding positions include arginine 94–isoleucine 95, aspartate 116, and arginine 162. Residues serine 233–threonine 235, threonine 264, threonine 293–glycine 294, and arginine 316 each bind D-glyceraldehyde 3-phosphate. Cysteine 234 acts as the Nucleophile in catalysis. Asparagine 398 contributes to the NAD(+) binding site.

This sequence belongs to the glyceraldehyde-3-phosphate dehydrogenase family. Homotetramer. As to expression, expressed in shoot and root vasculature, leaf veins and vascular tissue of flowers and siliques.

It localises to the plastid. The protein localises to the chloroplast stroma. The catalysed reaction is D-glyceraldehyde 3-phosphate + phosphate + NAD(+) = (2R)-3-phospho-glyceroyl phosphate + NADH + H(+). In terms of biological role, involved in plastidial glycolytic pathway and plays a specific role in glycolytic energy production in non-green plastids and chloroplasts. Essential for breakdown of starch to form sucrose for export to non-photosynthetic tissues, and to generate primary metabolites for anabolic pathways such as fatty acid and amino acid synthesis. Plays an important role in plant development by providing substrates for the phosphorylated pathway of serine biosynthesis in roots. Plays a crucial role in pollen development. Functionally redundant with GAPCP1. This Arabidopsis thaliana (Mouse-ear cress) protein is Glyceraldehyde-3-phosphate dehydrogenase GAPCP2, chloroplastic (GAPCP2).